The primary structure comprises 139 residues: D-ribose pyranase (139 aa).

H20 serves as the catalytic Proton donor. Residues D28, H106, and 128–130 each bind substrate; that span reads YAN.

The protein belongs to the RbsD / FucU family. RbsD subfamily. In terms of assembly, homodecamer.

Its subcellular location is the cytoplasm. It catalyses the reaction beta-D-ribopyranose = beta-D-ribofuranose. Its pathway is carbohydrate metabolism; D-ribose degradation; D-ribose 5-phosphate from beta-D-ribopyranose: step 1/2. In terms of biological role, catalyzes the interconversion of beta-pyran and beta-furan forms of D-ribose. This Actinobacillus pleuropneumoniae serotype 5b (strain L20) protein is D-ribose pyranase.